The following is a 208-amino-acid chain: Glutathione S-transferase GstB (208 aa).

The GST N-terminal domain maps to 1–83; sequence MITLWGRNNS…YLAAQYGQKR (83 aa). Glutathione-binding positions include Asn12, Asn39, Val53, and 67–68; that span reads ES. Residues 88–208 enclose the GST C-terminal domain; sequence SPARRAEAEK…VRKVVMIPVS (121 aa).

Belongs to the GST superfamily.

The enzyme catalyses RX + glutathione = an S-substituted glutathione + a halide anion + H(+). In terms of biological role, conjugation of reduced glutathione to a wide number of exogenous and endogenous hydrophobic electrophiles. The chain is Glutathione S-transferase GstB (gstB) from Escherichia coli O6:H1 (strain CFT073 / ATCC 700928 / UPEC).